A 301-amino-acid chain; its full sequence is uncharacterized protein (301 aa).

Active-site charge relay system residues include serine 44 and tyrosine 107. The active-site Proton donor is tyrosine 133. The Schiff-base intermediate with substrate role is filled by lysine 162.

This sequence belongs to the DapA family. In terms of assembly, homotetramer.

Its subcellular location is the cytoplasm. This is an uncharacterized protein from Pyrobaculum islandicum (strain DSM 4184 / JCM 9189 / GEO3).